A 334-amino-acid polypeptide reads, in one-letter code: YbbR-like domain-containing protein BB_0009 (334 aa).

A helical transmembrane segment spans residues 22 to 38 (AISILIAILMFVAFNFN). YbbR-like domains are found at residues 43-128 (ITTE…NVLL) and 138-220 (VKIE…VVNI).

Its subcellular location is the membrane. The protein is YbbR-like domain-containing protein BB_0009 of Borreliella burgdorferi (strain ATCC 35210 / DSM 4680 / CIP 102532 / B31) (Borrelia burgdorferi).